The sequence spans 361 residues: Peptide chain release factor 1 (361 aa).

Glutamine 233 carries the post-translational modification N5-methylglutamine. The span at 280-293 (ERRKKEQERADSRR) shows a compositional bias: basic and acidic residues. Residues 280–307 (ERRKKEQERADSRRGQVGSGDRSERIRT) are disordered.

Belongs to the prokaryotic/mitochondrial release factor family. In terms of processing, methylated by PrmC. Methylation increases the termination efficiency of RF1.

The protein localises to the cytoplasm. Functionally, peptide chain release factor 1 directs the termination of translation in response to the peptide chain termination codons UAG and UAA. In Rickettsia massiliae (strain Mtu5), this protein is Peptide chain release factor 1.